Consider the following 132-residue polypeptide: Protein NrdI (132 aa).

It belongs to the NrdI family.

Its function is as follows. Probably involved in ribonucleotide reductase function. The chain is Protein NrdI from Bartonella quintana (strain Toulouse) (Rochalimaea quintana).